A 449-amino-acid chain; its full sequence is UDP-N-acetylmuramoylalanine--D-glutamate ligase (449 aa).

118-124 (GTNGKTT) is a binding site for ATP.

The protein belongs to the MurCDEF family.

It localises to the cytoplasm. It carries out the reaction UDP-N-acetyl-alpha-D-muramoyl-L-alanine + D-glutamate + ATP = UDP-N-acetyl-alpha-D-muramoyl-L-alanyl-D-glutamate + ADP + phosphate + H(+). Its pathway is cell wall biogenesis; peptidoglycan biosynthesis. Cell wall formation. Catalyzes the addition of glutamate to the nucleotide precursor UDP-N-acetylmuramoyl-L-alanine (UMA). The chain is UDP-N-acetylmuramoylalanine--D-glutamate ligase from Staphylococcus aureus (strain Mu3 / ATCC 700698).